The following is a 328-amino-acid chain: MPVKPNQPRPSTKQDPSSGASRQRFGYVTGWLHRIRSVPAIAHFIRAGDRFNDRMGNQFGAAITYFSFLSLIPILMVSFATAGFVLASNPDLLTGLINRIVNSISDPSLARTLKNTVNTAVRQRTTVGLTGLLIALYSGVNWIGNLREAIHAQSRDVWERQPHEEEKIYLRYLWDFLSLIGLLLALVITLFLTSVAGSAQATIVRALGLNGIDWLRPVMTLIALSISIFANYLLFLWILWVLPRHNPRRGPLLRGTLMAAIGFEALKFAMTVALPELATSPSGAAFGSVIGLMTFFYFFARLTLFCAAWIATADPKTDINTQAPLPGA.

The segment at 1–22 (MPVKPNQPRPSTKQDPSSGASR) is disordered. Residues 9 to 21 (RPSTKQDPSSGAS) are compositionally biased toward polar residues. 6 helical membrane passes run 66 to 86 (FSFL…GFVL), 126 to 146 (TVGL…IGNL), 176 to 196 (FLSL…TSVA), 221 to 241 (LIAL…ILWV), 255 to 275 (GTLM…VALP), and 290 to 310 (IGLM…AAWI).

To E.coli YhjD.

It localises to the cell inner membrane. This is an uncharacterized protein from Dickeya dadantii (strain 3937) (Erwinia chrysanthemi (strain 3937)).